The sequence spans 307 residues: Fructokinase (307 aa).

It belongs to the carbohydrate kinase PfkB family.

The enzyme catalyses D-fructose + ATP = D-fructose 6-phosphate + ADP + H(+). This chain is Fructokinase (scrK), found in Salmonella typhimurium.